A 253-amino-acid chain; its full sequence is Triosephosphate isomerase (253 aa).

9-11 (NWK) provides a ligand contact to substrate. The Electrophile role is filled by His-95. The active-site Proton acceptor is Glu-167. Substrate contacts are provided by residues Gly-173, Ser-213, and 234 to 235 (GG). Ser-213 bears the Phosphoserine mark.

The protein belongs to the triosephosphate isomerase family. In terms of assembly, homodimer.

It is found in the cytoplasm. The enzyme catalyses D-glyceraldehyde 3-phosphate = dihydroxyacetone phosphate. The protein operates within carbohydrate biosynthesis; gluconeogenesis. Its pathway is carbohydrate degradation; glycolysis; D-glyceraldehyde 3-phosphate from glycerone phosphate: step 1/1. Involved in the gluconeogenesis. Catalyzes stereospecifically the conversion of dihydroxyacetone phosphate (DHAP) to D-glyceraldehyde-3-phosphate (G3P). The protein is Triosephosphate isomerase of Bacillus velezensis (strain DSM 23117 / BGSC 10A6 / LMG 26770 / FZB42) (Bacillus amyloliquefaciens subsp. plantarum).